Consider the following 252-residue polypeptide: Indole-3-glycerol phosphate synthase (252 aa).

It belongs to the TrpC family.

The catalysed reaction is 1-(2-carboxyphenylamino)-1-deoxy-D-ribulose 5-phosphate + H(+) = (1S,2R)-1-C-(indol-3-yl)glycerol 3-phosphate + CO2 + H2O. Its pathway is amino-acid biosynthesis; L-tryptophan biosynthesis; L-tryptophan from chorismate: step 4/5. The chain is Indole-3-glycerol phosphate synthase from Bacillus licheniformis (strain ATCC 14580 / DSM 13 / JCM 2505 / CCUG 7422 / NBRC 12200 / NCIMB 9375 / NCTC 10341 / NRRL NRS-1264 / Gibson 46).